A 360-amino-acid chain; its full sequence is Phospho-N-acetylmuramoyl-pentapeptide-transferase (360 aa).

Transmembrane regions (helical) follow at residues 26–46 (AILG…ILIK), 73–93 (TMGG…WGDL), 97–117 (YVLV…IDDY), 135–155 (ALQS…STMV), 168–188 (IMPQ…VGAS), 199–219 (GLAI…AYLS), 236–256 (AGEL…FLWF), 263–283 (VFMG…IAIL), 288–308 (ILLV…ILQV), and 338–358 (VIVR…ATLK).

The protein belongs to the glycosyltransferase 4 family. MraY subfamily. Requires Mg(2+) as cofactor.

It is found in the cell inner membrane. It carries out the reaction UDP-N-acetyl-alpha-D-muramoyl-L-alanyl-gamma-D-glutamyl-meso-2,6-diaminopimeloyl-D-alanyl-D-alanine + di-trans,octa-cis-undecaprenyl phosphate = di-trans,octa-cis-undecaprenyl diphospho-N-acetyl-alpha-D-muramoyl-L-alanyl-D-glutamyl-meso-2,6-diaminopimeloyl-D-alanyl-D-alanine + UMP. The protein operates within cell wall biogenesis; peptidoglycan biosynthesis. Functionally, catalyzes the initial step of the lipid cycle reactions in the biosynthesis of the cell wall peptidoglycan: transfers peptidoglycan precursor phospho-MurNAc-pentapeptide from UDP-MurNAc-pentapeptide onto the lipid carrier undecaprenyl phosphate, yielding undecaprenyl-pyrophosphoryl-MurNAc-pentapeptide, known as lipid I. This chain is Phospho-N-acetylmuramoyl-pentapeptide-transferase, found in Shewanella frigidimarina (strain NCIMB 400).